Consider the following 336-residue polypeptide: Coproporphyrin III ferrochelatase (336 aa).

Residues Ser52 and Tyr116 each coordinate Fe-coproporphyrin III. 2 residues coordinate Fe(2+): His176 and Glu259.

Belongs to the ferrochelatase family.

The protein resides in the cytoplasm. It catalyses the reaction Fe-coproporphyrin III + 2 H(+) = coproporphyrin III + Fe(2+). It functions in the pathway porphyrin-containing compound metabolism; protoheme biosynthesis. Involved in coproporphyrin-dependent heme b biosynthesis. Catalyzes the insertion of ferrous iron into coproporphyrin III to form Fe-coproporphyrin III. The sequence is that of Coproporphyrin III ferrochelatase from Mycobacterium leprae (strain Br4923).